The sequence spans 538 residues: Dihomomethionine N-hydroxylase (538 aa).

Residues 8–28 form a helical membrane-spanning segment; the sequence is LPYPFHILLVFILSMASITLL.

It belongs to the cytochrome P450 family. Heme is required as a cofactor. In terms of tissue distribution, highly expressed in cotyledons, leaves, stems and siliques. Detected in flowers and lateral roots, but not in the main root. Expressed only in the vascular bundles in apical plant parts.

It is found in the endoplasmic reticulum membrane. The enzyme catalyses an L-polyhomomethionine + 2 reduced [NADPH--hemoprotein reductase] + 2 O2 = an (E)-omega-(methylsulfanyl)-alkanal oxime + 2 oxidized [NADPH--hemoprotein reductase] + CO2 + 3 H2O + 2 H(+). It catalyses the reaction L-dihomomethionine + 2 reduced [NADPH--hemoprotein reductase] + 2 O2 = (E)-5-(methylsulfanyl)pentanal oxime + 2 oxidized [NADPH--hemoprotein reductase] + CO2 + 3 H2O + 2 H(+). The catalysed reaction is L-trihomomethionine + 2 reduced [NADPH--hemoprotein reductase] + 2 O2 = (E)-6-(methylsulfanyl)hexanal oxime + 2 oxidized [NADPH--hemoprotein reductase] + CO2 + 3 H2O + 2 H(+). Functionally, catalyzes the conversion of the short chain elongated methionines di-, tri-, and tetrahomomethionine to their respective aldoximes 5-methylthiopentanaldoxime, 6-methylthiohexanaldoxime, and 7-methylheptanaldoxime. The chain is Dihomomethionine N-hydroxylase (CYP79F1) from Arabidopsis thaliana (Mouse-ear cress).